The chain runs to 93 residues: HIG1 domain family member 1A, mitochondrial (93 aa).

At S2 the chain carries N-acetylserine. An HIG1 domain is found at 2–93 (STNTDLSLSS…YQEFWAKRKP (92 aa)). S8 is subject to Phosphoserine. A run of 2 helical transmembrane segments spans residues 28 to 48 (PFVP…LYKL) and 69 to 89 (GFVV…EFWA). The Mitochondrial matrix portion of the chain corresponds to 90–93 (KRKP).

In terms of assembly, associates with cytochrome c oxidase (COX, complex IV); proposed complex component. Also associates with respiratory chain supercomplexes. Expressed in brain and spinal cord.

The protein resides in the mitochondrion membrane. It localises to the mitochondrion inner membrane. Proposed subunit of cytochrome c oxidase (COX, complex IV), which is the terminal component of the mitochondrial respiratory chain that catalyzes the reduction of oxygen to water. May play a role in the assembly of respiratory supercomplexes. The chain is HIG1 domain family member 1A, mitochondrial (Higd1a) from Rattus norvegicus (Rat).